A 250-amino-acid chain; its full sequence is Aminoglycoside 3'-phosphotransferase (250 aa).

D178 acts as the Proton acceptor in catalysis.

Belongs to the aminoglycoside phosphotransferase family.

It catalyses the reaction kanamycin A + ATP = kanamycin 3'-phosphate + ADP + H(+). Resistance to kanamycin and structurally-related aminoglycosides, including amikacin. The polypeptide is Aminoglycoside 3'-phosphotransferase (aphA-7) (Campylobacter jejuni).